The primary structure comprises 372 residues: uncharacterized protein (372 aa).

A signal peptide spans 1-24; that stretch reads MSYYQIIVCILASISYIILLEVIA. One can recognise a PA domain in the interval 92-215; that stretch reads PNRNDTDASY…SSYNLLWSDL (124 aa). A helical membrane pass occupies residues 236 to 256; that stretch reads FWPFLLCFSPSIIMLITVQAL. Ser-280 is modified (phosphoserine). The RING-type; atypical zinc finger occupies 321 to 363; the sequence is CVICLESFTKGDKVVALPCKHEFHRPCIAKWIVDYRHACPTCN.

The protein resides in the golgi apparatus membrane. It is found in the vacuole membrane. This is an uncharacterized protein from Schizosaccharomyces pombe (strain 972 / ATCC 24843) (Fission yeast).